Reading from the N-terminus, the 476-residue chain is MLSKKPNILVIGDLMIDHYLWGSCDRISPEAPVQVVNVKKESSVLGGAGNVINNLFTLGTTVDVISVIGDDNVANELKSLLEKIKISTSNLIVENNRKTSKKSRLIASQQQVLRYDMESIDDINEESHKKIISNLEKNIKKYSSIILSDYGKGVLTTKLTQDIINIANKNSVKVLVDPKGKDYSKYKGSYTLTPNKKEAQEATNIDIKDENSLINALKDLKEKCDLEVSLITLSEQGIAIFDENLTIKPTVAREVYDVTGAGDTVIASIAFALGNDLNINEAVSFANLAAGVVVGKLGSATTTLDEIYEYESSLHKSNSNSHIKTFEEIEKLAAKLHNLGKKIVFTNGCFDILHVGHVKYLEEARSYGDVLILGLNADSSVKKLKGESRPINNQDDRAYILASLESVDYVVIFEEETPYELIKLIKPHVLVKGGDYEGKDVVGQDIADELKLVKFVDGKSTTNTIKRIQENEKCNN.

The interval M1 to N318 is ribokinase. N195–E198 provides a ligand contact to ATP. D263 is an active-site residue. The interval F345–N476 is cytidylyltransferase.

The protein in the N-terminal section; belongs to the carbohydrate kinase PfkB family. It in the C-terminal section; belongs to the cytidylyltransferase family. In terms of assembly, homodimer.

It carries out the reaction D-glycero-beta-D-manno-heptose 7-phosphate + ATP = D-glycero-beta-D-manno-heptose 1,7-bisphosphate + ADP + H(+). It catalyses the reaction D-glycero-beta-D-manno-heptose 1-phosphate + ATP + H(+) = ADP-D-glycero-beta-D-manno-heptose + diphosphate. Its pathway is nucleotide-sugar biosynthesis; ADP-L-glycero-beta-D-manno-heptose biosynthesis; ADP-L-glycero-beta-D-manno-heptose from D-glycero-beta-D-manno-heptose 7-phosphate: step 1/4. It functions in the pathway nucleotide-sugar biosynthesis; ADP-L-glycero-beta-D-manno-heptose biosynthesis; ADP-L-glycero-beta-D-manno-heptose from D-glycero-beta-D-manno-heptose 7-phosphate: step 3/4. Functionally, catalyzes the phosphorylation of D-glycero-D-manno-heptose 7-phosphate at the C-1 position to selectively form D-glycero-beta-D-manno-heptose-1,7-bisphosphate. Its function is as follows. Catalyzes the ADP transfer from ATP to D-glycero-beta-D-manno-heptose 1-phosphate, yielding ADP-D-glycero-beta-D-manno-heptose. The sequence is that of Bifunctional protein HldE from Aliarcobacter butzleri (strain RM4018) (Arcobacter butzleri).